We begin with the raw amino-acid sequence, 479 residues long: Leucine-rich repeat-containing protein 74A (479 aa).

Residues 1–10 (MDDDDIEPLE) show a composition bias toward acidic residues. Residues 1–29 (MDDDDIEPLEYETKDETEAALAPQSSEDT) are disordered. LRR repeat units lie at residues 119 to 140 (TVLK…SLME), 147 to 167 (YLQE…RIIS), 176 to 197 (SLWK…LLCQ), 204 to 225 (RIRS…YLGQ), 232 to 253 (GLQS…ALCN), 260 to 281 (TLKK…ALGD), 288 to 309 (CLVY…RISK), and 316 to 336 (CLQV…YSLI).

The chain is Leucine-rich repeat-containing protein 74A from Rattus norvegicus (Rat).